The primary structure comprises 101 residues: Small ribosomal subunit protein uS14 (101 aa).

It belongs to the universal ribosomal protein uS14 family. In terms of assembly, part of the 30S ribosomal subunit. Contacts proteins S3 and S10.

Its function is as follows. Binds 16S rRNA, required for the assembly of 30S particles and may also be responsible for determining the conformation of the 16S rRNA at the A site. The sequence is that of Small ribosomal subunit protein uS14 from Shewanella woodyi (strain ATCC 51908 / MS32).